Consider the following 132-residue polypeptide: Sec-independent protein translocase protein TatB (132 aa).

A helical membrane pass occupies residues 2–22 (FDGIGFMELLLIGILGLVVLG). Residues 86-132 (LKSAAQSVNRPYKVEDISPASSSAPVDPAPTETKTAETSANSEKPNG) are disordered. Residues 103–115 (SPASSSAPVDPAP) are compositionally biased toward low complexity. Over residues 117 to 132 (ETKTAETSANSEKPNG) the composition is skewed to polar residues.

This sequence belongs to the TatB family. The Tat system comprises two distinct complexes: a TatABC complex, containing multiple copies of TatA, TatB and TatC subunits, and a separate TatA complex, containing only TatA subunits. Substrates initially bind to the TatABC complex, which probably triggers association of the separate TatA complex to form the active translocon.

It localises to the cell inner membrane. In terms of biological role, part of the twin-arginine translocation (Tat) system that transports large folded proteins containing a characteristic twin-arginine motif in their signal peptide across membranes. Together with TatC, TatB is part of a receptor directly interacting with Tat signal peptides. TatB may form an oligomeric binding site that transiently accommodates folded Tat precursor proteins before their translocation. The sequence is that of Sec-independent protein translocase protein TatB from Shewanella sediminis (strain HAW-EB3).